A 209-amino-acid chain; its full sequence is Uracil phosphoribosyltransferase (209 aa).

5-phospho-alpha-D-ribose 1-diphosphate contacts are provided by residues arginine 79, arginine 104, and 131 to 139; that span reads DPMLATGGS. Uracil is bound by residues isoleucine 194 and 199-201; that span reads GDA. Aspartate 200 lines the 5-phospho-alpha-D-ribose 1-diphosphate pocket.

Belongs to the UPRTase family. It depends on Mg(2+) as a cofactor.

The catalysed reaction is UMP + diphosphate = 5-phospho-alpha-D-ribose 1-diphosphate + uracil. It functions in the pathway pyrimidine metabolism; UMP biosynthesis via salvage pathway; UMP from uracil: step 1/1. Allosterically activated by GTP. Its function is as follows. Catalyzes the conversion of uracil and 5-phospho-alpha-D-ribose 1-diphosphate (PRPP) to UMP and diphosphate. This Streptococcus mutans serotype c (strain ATCC 700610 / UA159) protein is Uracil phosphoribosyltransferase.